A 185-amino-acid polypeptide reads, in one-letter code: Ribosome-recycling factor (185 aa).

It belongs to the RRF family.

It is found in the cytoplasm. Responsible for the release of ribosomes from messenger RNA at the termination of protein biosynthesis. May increase the efficiency of translation by recycling ribosomes from one round of translation to another. The chain is Ribosome-recycling factor from Enterococcus faecalis (strain ATCC 700802 / V583).